A 1496-amino-acid polypeptide reads, in one-letter code: Chromosome partition protein MukB (1496 aa).

63–70 (GGNGAGKS) contacts ATP. 5 coiled-coil regions span residues 328-493 (KLEL…QRLS), 536-632 (KMQA…APAW), 808-832 (RAAR…HAER), 861-1171 (NPEE…SAEE), and 1235-1291 (IDAI…LQNI). The flexible hinge stretch occupies residues 694–811 (PDGSDDVRLN…EVPLFGRAAR (118 aa)). The span at 1082–1091 (RARSRRDELQ) shows a compositional bias: basic and acidic residues. Positions 1082–1101 (RARSRRDELQQRLSQQRSRK) are disordered.

This sequence belongs to the SMC family. MukB subfamily. Homodimerization via its hinge domain. Binds to DNA via its C-terminal region. Interacts, and probably forms a ternary complex, with MukE and MukF via its C-terminal region. The complex formation is stimulated by calcium or magnesium. Interacts with tubulin-related protein FtsZ.

Its subcellular location is the cytoplasm. It localises to the nucleoid. Plays a central role in chromosome condensation, segregation and cell cycle progression. Functions as a homodimer, which is essential for chromosome partition. Involved in negative DNA supercoiling in vivo, and by this means organize and compact chromosomes. May achieve or facilitate chromosome segregation by condensation DNA from both sides of a centrally located replisome during cell division. This Actinobacillus pleuropneumoniae serotype 5b (strain L20) protein is Chromosome partition protein MukB.